Here is a 272-residue protein sequence, read N- to C-terminus: Phosphatidylglycerol--prolipoprotein diacylglyceryl transferase (272 aa).

A run of 7 helical transmembrane segments spans residues 17–37 (LQVHWYGLMYLLAFLCAWGLA), 55–75 (LVFYGALGVVLGGRIGYVLFY), 90–110 (VWTGGMSFHGGFLGVMIAMLF), 125–145 (FVAPCVPTGLMFGRIGNFIGG), 174–194 (PSQIYQALCEGLLLFIILWWF), 202–222 (MAVSALFLMGYGVARFVMEFF), and 230–250 (GFILFGWMTKGQILTVPMLLI). Position 138 (R138) interacts with a 1,2-diacyl-sn-glycero-3-phospho-(1'-sn-glycerol).

Belongs to the Lgt family.

It localises to the cell inner membrane. It catalyses the reaction L-cysteinyl-[prolipoprotein] + a 1,2-diacyl-sn-glycero-3-phospho-(1'-sn-glycerol) = an S-1,2-diacyl-sn-glyceryl-L-cysteinyl-[prolipoprotein] + sn-glycerol 1-phosphate + H(+). Its pathway is protein modification; lipoprotein biosynthesis (diacylglyceryl transfer). Its function is as follows. Catalyzes the transfer of the diacylglyceryl group from phosphatidylglycerol to the sulfhydryl group of the N-terminal cysteine of a prolipoprotein, the first step in the formation of mature lipoproteins. The protein is Phosphatidylglycerol--prolipoprotein diacylglyceryl transferase of Acinetobacter baumannii (strain AB307-0294).